The primary structure comprises 133 residues: Large ribosomal subunit protein bL21 (133 aa).

The interval 1 to 22 is disordered; the sequence is MAEKPAAKPKAAAAKAEAKDQS.

This sequence belongs to the bacterial ribosomal protein bL21 family. Part of the 50S ribosomal subunit. Contacts protein L20.

In terms of biological role, this protein binds to 23S rRNA in the presence of protein L20. In Prochlorococcus marinus (strain MIT 9303), this protein is Large ribosomal subunit protein bL21.